Reading from the N-terminus, the 224-residue chain is UPF0758 protein lwe1562 (224 aa).

Positions 102–224 (VIRCPDDAVK…YISLKEKGYF (123 aa)) constitute an MPN domain. Residues His-173, His-175, and Asp-186 each contribute to the Zn(2+) site. Positions 173-186 (HNHPSGDPTPSSED) match the JAMM motif motif.

It belongs to the UPF0758 family.

This Listeria welshimeri serovar 6b (strain ATCC 35897 / DSM 20650 / CCUG 15529 / CIP 8149 / NCTC 11857 / SLCC 5334 / V8) protein is UPF0758 protein lwe1562.